The following is a 45-amino-acid chain: Osteocalcin 1 (45 aa).

In terms of domain architecture, Gla spans 1–41; it reads AAGQLSLTQLESLREVCELNLACEHMMDTEGIIAAYTAYYG. Positions 11, 15, 18, and 24 each coordinate Ca(2+). 4-carboxyglutamate is present on residues Glu-11, Glu-15, and Glu-18. Cys-17 and Cys-23 form a disulfide bridge.

It belongs to the osteocalcin/matrix Gla protein family. Gamma-carboxyglutamate residues are formed by vitamin K dependent carboxylation by GGCX. These residues are essential for the binding of calcium.

Its subcellular location is the secreted. The carboxylated form is one of the main organic components of the bone matrix, which constitutes 1-2% of the total bone protein. The carboxylated form binds strongly to apatite and calcium. In Diplodus sargus (White seabream), this protein is Osteocalcin 1.